Consider the following 448-residue polypeptide: Chromosomal replication initiator protein DnaA (448 aa).

Residues 1-93 (MEQIVSSLWS…KPTEQNLSAS (93 aa)) form a domain I, interacts with DnaA modulators region. Residues 94 to 110 (STNKEELTQDTVHKFKT) are domain II. The interval 111–328 (GLNGRLTFDN…GAINRVSAWC (218 aa)) is domain III, AAA+ region. 4 residues coordinate ATP: G156, G158, K159, and T160. The tract at residues 329–448 (NFTKRQITID…YTNLTRKLSS (120 aa)) is domain IV, binds dsDNA.

The protein belongs to the DnaA family. As to quaternary structure, oligomerizes as a right-handed, spiral filament on DNA at oriC.

It localises to the cytoplasm. In terms of biological role, plays an essential role in the initiation and regulation of chromosomal replication. ATP-DnaA binds to the origin of replication (oriC) to initiate formation of the DNA replication initiation complex once per cell cycle. Binds the DnaA box (a 9 base pair repeat at the origin) and separates the double-stranded (ds)DNA. Forms a right-handed helical filament on oriC DNA; dsDNA binds to the exterior of the filament while single-stranded (ss)DNA is stabiized in the filament's interior. The ATP-DnaA-oriC complex binds and stabilizes one strand of the AT-rich DNA unwinding element (DUE), permitting loading of DNA polymerase. After initiation quickly degrades to an ADP-DnaA complex that is not apt for DNA replication. Binds acidic phospholipids. This is Chromosomal replication initiator protein DnaA from Haemophilus ducreyi (strain 35000HP / ATCC 700724).